A 205-amino-acid polypeptide reads, in one-letter code: StAR-related lipid transfer protein 4 (205 aa).

The 205-residue stretch at 1–205 (MEGLSDVASF…NFYGDLRKAL (205 aa)) folds into the START domain.

It catalyses the reaction cholesterol(in) = cholesterol(out). Functionally, involved in the intracellular transport of cholesterol. Binds cholesterol or other sterols. The chain is StAR-related lipid transfer protein 4 (STARD4) from Homo sapiens (Human).